The primary structure comprises 451 residues: Probable plasmid replicative DNA helicase (451 aa).

The region spanning Gln194–Trp451 is the SF4 helicase domain. Ala225–Thr232 provides a ligand contact to ATP.

This sequence belongs to the helicase family. DnaB subfamily. In terms of assembly, homohexamer.

The catalysed reaction is Couples ATP hydrolysis with the unwinding of duplex DNA at the replication fork by translocating in the 5'-3' direction. This creates two antiparallel DNA single strands (ssDNA). The leading ssDNA polymer is the template for DNA polymerase III holoenzyme which synthesizes a continuous strand.. It catalyses the reaction ATP + H2O = ADP + phosphate + H(+). Its function is as follows. A replicative DNA helicase, it participates in initiation and elongation during DNA replication. Travels ahead of the DNA replisome, separating dsDNA into templates for DNA synthesis. A processive ATP-dependent 5'-3' DNA helicase it has DNA-dependent ATPase activity. The plasmid this protein is encoded on is thought to be required for growth within mammalian cells. The chain is Probable plasmid replicative DNA helicase from Chlamydia trachomatis serovar L2 (strain ATCC VR-902B / DSM 19102 / 434/Bu).